A 1501-amino-acid chain; its full sequence is MGNTLDSNKPKNFVTYADYKYIGKLNNKNEHHGIGIILYNSGESFYGSFINGKKEGKGIYIDKNLTRYINTWVDNKVFGKVKVVPYNSNRVYYFYYKNYMIEKCIYFDNNINNKESHHKNNIYNNYDNNSYNNNSCDDEEKRKYPIGVTKFKEDLSNYIHSTHIMKKNNKLFNKNDNEYNIFSSSLSYSSDSENINLLDILKKKKNKKNKKNKKKKNKKTKNTQILSCTQHKMYEHNMNESNFTKKDNVNCEHTDKMNISLHEKNDKKNEKKNEKKNKKKKLFKYFSNNIENLIIENYQTWSLREVIQWLMLCNVPVKWLISFYKNNITGDKLKYININTIRNELGIIAYGHAIKILQLIKNLQVMAYNKKFNNLIQIEEYKNYIRQKENTNKNIKKGKNIKKEKKKKKEKNIKKEKKKKKKETKKFNNMDKKYIDLAIHKNVKNIQNDTFYNKHENIYNCKNQTNFIYQNDSEIKKIMNKKKVSFEYDNNEEKKKKNIIKFIKNNKSLQNSNGEYYLINHLSKGICSDSIFYKSSQSKSSSQLSSPLSSPLSSPSPSSSPSSSPSSSPSSSPSSSPSPSSSPSPSSSPSSSPSSSPSSPPSPLSYKDNFPISSSCSSLERLPSYEKKLLSSSQSNIEHIKNLPLDVLSNNNSSANIKIKKSKSKYNNDKKEQKKLPLILNKSSSEFSPSHSYTSKSYHYNIKPSLQSSSNNSSDSSYSISSTCSSSSSYVSSLYSNRSNDILNFYRNKIIKYCNNIYMNTKLAYSYMNGFIIPHEDLIFIHPIENYYMDNTNEKNNINNPYTKEKIMNHNFSFNTKNNTSFIDINTNIFSSNKQQNINNFGKYKKMKSRMFKGKYMGKEVAIKILVGKIKNFKKLHQILYNLYNLRHSNLVLIMGVSIHYPFVFIIYEYMKNKCLFSYLHCIKYKHVYISTFLQRYKTLLHITQQEKIKKTNNINNNNNINHNNINNNNINHNNINHNNINNNNINNNNINYNKDYNNKKKKEDEQHNIEHQDTFIDLPEKSNISSDDNNSTDISQIQKENFHFLNKKIEENKNIIYDDHTSTLSDHSIHNINKSYDNVYKNKMNIFHYQHNVLCGAYDNNDNNINDNDIYCNNIYDNNINDNHIYCNNINDNHIYCNNINDNHIYCNNIYDHHKNTSLNSKEQNTDHNIEQINECNKYASETKYNIKKSNLKNNIISHKNFQKCNQIQMNQPYTFPPYQKELSSYLKNEKIKRKRKVLFSYLKTHIHFNSQQINDQHNRLSVQKIMKIITDVTLACTYLEKEKMSPINLKPTNILLDESLNAKISDFGISKIENCLDMNIDYSYKISSNSVIKINKKEYEQKKAKKIKIVNKNNNDLLYLYDHNNNVYKYNTQYIDVTYNNSYPSIFYWTPPEILRGKKNKKFYSDIYAFGIILWEMLSNDIPYNYPFASHIMAVVGYANEELSFNNIPVSIQSLIKACVNRNKYKRPTFEHILKTISTLYQKANTKVEDALISFMDGT.

N-linked (GlcNAc...) asparagine glycans are attached at residues Asn-64, Asn-128, and Asn-133. A compositionally biased stretch (basic residues) spans 204-221 (KKNKKNKKNKKKKNKKTK). Residues 204–223 (KKNKKNKKNKKKKNKKTKNT) are disordered. N-linked (GlcNAc...) asparagine glycosylation is found at Asn-239, Asn-242, Asn-258, and Asn-327. Basic and acidic residues predominate over residues 257-273 (MNISLHEKNDKKNEKKN). A disordered region spans residues 257 to 276 (MNISLHEKNDKKNEKKNEKK). The 66-residue stretch at 301 to 366 (WSLREVIQWL…LQLIKNLQVM (66 aa)) folds into the SAM domain. A disordered region spans residues 392–425 (NKNIKKGKNIKKEKKKKKEKNIKKEKKKKKKETK). Residues 394–424 (NIKKGKNIKKEKKKKKEKNIKKEKKKKKKET) are compositionally biased toward basic residues. Residues 399–433 (KNIKKEKKKKKEKNIKKEKKKKKKETKKFNNMDKK) are a coiled coil. N-linked (GlcNAc...) asparagine glycosylation is found at Asn-448, Asn-463, and Asn-471. The short motif at 483–486 (KVSF) is the RVxF motif 1 element. The N-linked (GlcNAc...) asparagine glycan is linked to Asn-506. Over residues 543–597 (QLSSPLSSPLSSPSPSSSPSSSPSSSPSSSPSSSPSPSSSPSPSSSPSSSPSSSP) the composition is skewed to low complexity. The tract at residues 543-607 (QLSSPLSSPL…SSPPSPLSYK (65 aa)) is disordered. Asn-652 is a glycosylation site (N-linked (GlcNAc...) asparagine). A disordered region spans residues 659 to 678 (IKKSKSKYNNDKKEQKKLPL). Residues 666–675 (YNNDKKEQKK) show a composition bias toward basic and acidic residues. Residues Asn-681, Asn-712, Asn-737, Asn-811, and Asn-819 are each glycosylated (N-linked (GlcNAc...) asparagine). Residues 836–844 (QNINNFGKY) and Lys-864 contribute to the ATP site. Asn-1024, Asn-1031, Asn-1074, and Asn-1157 each carry an N-linked (GlcNAc...) asparagine glycan. The Protein kinase domain occupies 1088–1483 (FHYQHNVLCG…HILKTISTLY (396 aa)). Residues 1238 to 1241 (KVLF) carry the RVxF motif 2 motif. The N-linked (GlcNAc...) asparagine glycan is linked to Asn-1382.

The protein belongs to the protein kinase superfamily. TKL Ser/Thr protein kinase family. Interacts (via RVxF motif 1 and/or 2) with phosphatase PP1C. May interact (via SAM domain) with SERA5 (via C-terminus).

It localises to the parasitophorous vacuole. The protein resides in the host cell membrane. Its subcellular location is the host cytoplasm. The protein localises to the host cytoskeleton. The chain is Inactive protein tyrosine kinase pTKL from Plasmodium falciparum (isolate 3D7).